Reading from the N-terminus, the 138-residue chain is Basic phospholipase A2 ammodytoxin A (138 aa).

The N-terminal stretch at 1–16 (MRTLWIVAVCLIGVEG) is a signal peptide. Cystine bridges form between Cys42/Cys131, Cys44/Cys60, Cys59/Cys111, Cys65/Cys138, Cys66/Cys104, Cys73/Cys97, and Cys91/Cys102. Residues Tyr43, Gly45, and Gly47 each coordinate Ca(2+). Residue His63 is part of the active site. Ca(2+) is bound at residue Asp64. The active site involves Asp105.

The protein belongs to the phospholipase A2 family. Group II subfamily. D49 sub-subfamily. In terms of assembly, monomer. Binds to calmodulin, coagulation factor X (F10), M-type PLA2 receptor (R-180). May also bind to 14-3-3 proteins gamma (YWHAG) and epsilon (YWHAE), and R25, a mitochondrial membrane protein. Requires Ca(2+) as cofactor. As to expression, expressed by the venom gland.

It localises to the secreted. The protein resides in the host cytoplasm. The protein localises to the host cytosol. The enzyme catalyses a 1,2-diacyl-sn-glycero-3-phosphocholine + H2O = a 1-acyl-sn-glycero-3-phosphocholine + a fatty acid + H(+). In terms of biological role, snake venom phospholipase A2 (PLA2) that acts as a presynaptic neurotoxin, an inhibitor of blood coagulation, and has been found to bind with high affinity to intracellular proteins. The response of indirectly stimulated neuromuscular preparations to ammodytoxin (Atx) is triphasic. The first phase, the transient inhibition of the acetylcholine (ACh) release, starts soon after the addition of Atx and lasts for several minutes. This phase is probably independent of Atx enzymatic activity. The effect may be due to the specific binding of the toxin to presynaptic receptors. These receptors, called N-type receptors, are still unidentified. It is noteworthy that a neuronal isoform of the M-type PLA2 receptor (R180) has been identified as a high-affinity receptor for Atx in neuronal plasma membranes. It was demonstrated however that this receptor is not essential for expression of neurotoxicity by Atx. The second phase corresponds to an augmentation of neurotransmitter release. A peak is reached 10-20 minutes after exposure of the preparation to Atx and is followed by a gradual reduction. In this phase, the enzymatic activity of Atx of the mammalian is not significant. It is speculated that the increased release of neurotransmitter in this phase is induced by the interference of Atx with voltage-gated potassium channels. Measurements of ionic currents showed however that voltage-gated potassium channels are not affected by Atx. The third phase of the response of neuromuscular preparations to Atx, which corresponds to a complete and irreversible paralysis, is clearly dependent on the hydrolytic activity of the toxin. In addition to its presynaptic neurotoxicity, Atx shows an anticoagulant activity by binding with high affinity to activated coagulation factor X (F10) thus inhibiting the formation of the prothrombinase complex (FX/FV) and its activity (IC(50) is 20 nM). Surprisingly, Atx was discovered to bind intracellular proteins such as calmodulin (CaM) (IC(50) is 6 nM), 14-3-3 proteins gamma (YWHAG) and epsilon (YWHAE) (by similarity with AtxC), as well as R25 (by similarity with AtxC), a mitochondrial integral membrane protein found in cerebral cortex. These findings raised a doubt about the dogma of the exclusively extracellular action of PLA2s, defended by the potential instability of these molecules in the reducing environment of the eukaryotic cytosol coupled with their possible inability to act as enzymes in this cellular compartment, due to too low concentration of calcium ions. This hypothesis was challenged efficiently by demonstrating the internalization of AtxA into a culture cells, but still remains to be directly demonstrated in vivo. PLA2 catalyzes the calcium-dependent hydrolysis of the 2-acyl groups in 3-sn-phosphoglycerides. This chain is Basic phospholipase A2 ammodytoxin A, found in Vipera ammodytes ammodytes (Western sand viper).